Consider the following 374-residue polypeptide: N-acetyldiaminopimelate deacetylase (374 aa).

Aspartate 69 is an active-site residue. The Proton acceptor role is filled by glutamate 128.

Belongs to the peptidase M20A family. N-acetyldiaminopimelate deacetylase subfamily.

It carries out the reaction N-acetyl-(2S,6S)-2,6-diaminopimelate + H2O = (2S,6S)-2,6-diaminopimelate + acetate. The protein operates within amino-acid biosynthesis; L-lysine biosynthesis via DAP pathway; LL-2,6-diaminopimelate from (S)-tetrahydrodipicolinate (acetylase route): step 3/3. In terms of biological role, catalyzes the conversion of N-acetyl-diaminopimelate to diaminopimelate and acetate. In Bacillus licheniformis (strain ATCC 14580 / DSM 13 / JCM 2505 / CCUG 7422 / NBRC 12200 / NCIMB 9375 / NCTC 10341 / NRRL NRS-1264 / Gibson 46), this protein is N-acetyldiaminopimelate deacetylase.